An 88-amino-acid polypeptide reads, in one-letter code: MALAVRVVYCGAUGYKPKYLQLKEKLEHEFPGCLDICGEGTPQVTGFFEVTVAGKLVHSKKRGDGYVDTESKFRKLVTAIKAALAQCQ.

The segment at residues 10 to 13 (CGAU) is a cross-link (cysteinyl-selenocysteine (Cys-Sec); redox-active). Residue Sec-13 is a non-standard amino acid, selenocysteine. At Cys-37 the chain carries S-glutathionyl cysteine.

This sequence belongs to the SelWTH family. Selenoprotein W subfamily. In terms of assembly, interacts with DPYSL2, PRDX1, YWHAB, YWHAG, HSP70 and HSP90. As to expression, in the embryo, expressed in the developing nervous system and in mesoderm-derived tissues such as heart and limbs. In the adult, predominantly expressed in brain, skeletal muscle and heart.

It is found in the cytoplasm. Functionally, plays a role as a glutathione (GSH)-dependent antioxidant. May be involved in a redox-related process. May play a role in the myopathies of selenium deficiency. The protein is Selenoprotein W of Mus musculus (Mouse).